A 503-amino-acid chain; its full sequence is Aspartyl/glutamyl-tRNA(Asn/Gln) amidotransferase subunit B (503 aa).

The protein belongs to the GatB/GatE family. GatB subfamily. As to quaternary structure, heterotrimer of A, B and C subunits.

The catalysed reaction is L-glutamyl-tRNA(Gln) + L-glutamine + ATP + H2O = L-glutaminyl-tRNA(Gln) + L-glutamate + ADP + phosphate + H(+). It catalyses the reaction L-aspartyl-tRNA(Asn) + L-glutamine + ATP + H2O = L-asparaginyl-tRNA(Asn) + L-glutamate + ADP + phosphate + 2 H(+). Functionally, allows the formation of correctly charged Asn-tRNA(Asn) or Gln-tRNA(Gln) through the transamidation of misacylated Asp-tRNA(Asn) or Glu-tRNA(Gln) in organisms which lack either or both of asparaginyl-tRNA or glutaminyl-tRNA synthetases. The reaction takes place in the presence of glutamine and ATP through an activated phospho-Asp-tRNA(Asn) or phospho-Glu-tRNA(Gln). This Rhodococcus erythropolis (strain PR4 / NBRC 100887) protein is Aspartyl/glutamyl-tRNA(Asn/Gln) amidotransferase subunit B.